The chain runs to 408 residues: Peptidase T (408 aa).

Residue histidine 78 participates in Zn(2+) binding. Residue aspartate 80 is part of the active site. Residue aspartate 141 coordinates Zn(2+). Catalysis depends on glutamate 175, which acts as the Proton acceptor. Residues glutamate 176, aspartate 198, and histidine 380 each coordinate Zn(2+).

The protein belongs to the peptidase M20B family. Zn(2+) is required as a cofactor.

It localises to the cytoplasm. It carries out the reaction Release of the N-terminal residue from a tripeptide.. Cleaves the N-terminal amino acid of tripeptides. The polypeptide is Peptidase T (Halothermothrix orenii (strain H 168 / OCM 544 / DSM 9562)).